Here is a 338-residue protein sequence, read N- to C-terminus: DNA-directed RNA polymerase subunit alpha (338 aa).

The interval 1–234 is alpha N-terminal domain (alpha-NTD); that stretch reads MIHKNWQELI…DQLSIFVNFD (234 aa). The alpha C-terminal domain (alpha-CTD) stretch occupies residues 250–338; that stretch reads FNPLLLKKVD…ELAKKYEDNF (89 aa).

It belongs to the RNA polymerase alpha chain family. In terms of assembly, homodimer. The RNAP catalytic core consists of 2 alpha, 1 beta, 1 beta' and 1 omega subunit. When a sigma factor is associated with the core the holoenzyme is formed, which can initiate transcription.

The enzyme catalyses RNA(n) + a ribonucleoside 5'-triphosphate = RNA(n+1) + diphosphate. In terms of biological role, DNA-dependent RNA polymerase catalyzes the transcription of DNA into RNA using the four ribonucleoside triphosphates as substrates. This is DNA-directed RNA polymerase subunit alpha from Jannaschia sp. (strain CCS1).